The primary structure comprises 2345 residues: Acetyl-CoA carboxylase 1 (2345 aa).

The residue at position 1 (M1) is an N-acetylmethionine. Residues S5, S23, S25, S29, S34, S47, S49, and S52 each carry the phosphoserine modification. A Phosphothreonine modification is found at T57. Residues S77 and S79 each carry the phosphoserine modification. Position 79 is a phosphoserine; by AMPK (S79). The region spanning 116–617 (VIEKVLIANN…DTGWLDRLIA (502 aa)) is the Biotin carboxylation domain. The ATP-grasp domain maps to 274–465 (SKRILNVPQD…LPAAQLQIAM (192 aa)). 300-357 (AEEVGYPVMIKASEGGGGKGIRKVNNADDFPNLFRQVQAEVPGSPIFVMRLAKQSRHL) provides a ligand contact to ATP. Mg(2+) is bound by residues E423, E436, and N438. Mn(2+)-binding residues include E423, E436, and N438. Residue R440 is part of the active site. At T609 the chain carries Phosphothreonine. Positions 744 to 818 (FEKENDPSVM…DPGCVIAKMQ (75 aa)) constitute a Biotinyl-binding domain. N6-biotinyllysine is present on K785. Residues S834, S1200, S1215, and S1217 each carry the phosphoserine modification. T1226 bears the Phosphothreonine mark. S1258, S1262, and S1272 each carry phosphoserine. K1333 carries the N6-acetyllysine modification. Positions 1575–1913 (PYVTKDLLQS…SVHSSVPLLN (339 aa)) constitute a CoA carboxyltransferase N-terminal domain. Residues 1575-2233 (PYVTKDLLQS…EDLVKKKIHN (659 aa)) form a carboxyltransferase region. Residues R1822, K2126, and R2128 each contribute to the CoA site. The 317-residue stretch at 1917 to 2233 (PIDRIIEFVP…EDLVKKKIHN (317 aa)) folds into the CoA carboxyltransferase C-terminal domain. T2152 bears the Phosphothreonine mark.

As to quaternary structure, monomer, homodimer, and homotetramer. Can form filamentous polymers. Interacts in its inactive phosphorylated form with the BRCT domains of BRCA1 which prevents ACACA dephosphorylation and inhibits lipid synthesis. Interacts with MID1IP1; interaction with MID1IP1 promotes oligomerization and increases its activity. Mg(2+) is required as a cofactor. The cofactor is Mn(2+). Requires biotin as cofactor. Phosphorylation on Ser-1262 is required for interaction with BRCA1. Post-translationally, phosphorylation at Ser-79 by AMPK inactivates enzyme activity. In terms of processing, the biotin cofactor is covalently attached to the central biotinyl-binding domain and is required for the catalytic activity.

Its subcellular location is the cytoplasm. It is found in the cytosol. The catalysed reaction is hydrogencarbonate + acetyl-CoA + ATP = malonyl-CoA + ADP + phosphate + H(+). Its pathway is lipid metabolism; malonyl-CoA biosynthesis; malonyl-CoA from acetyl-CoA: step 1/1. Inhibited by phosphorylation. Citrate promotes oligomerization of the protein into filaments that correspond to the most active form of the carboxylase. Cytosolic enzyme that catalyzes the carboxylation of acetyl-CoA to malonyl-CoA, the first and rate-limiting step of de novo fatty acid biosynthesis. This is a 2 steps reaction starting with the ATP-dependent carboxylation of the biotin carried by the biotin carboxyl carrier (BCC) domain followed by the transfer of the carboxyl group from carboxylated biotin to acetyl-CoA. In Mus musculus (Mouse), this protein is Acetyl-CoA carboxylase 1.